Reading from the N-terminus, the 94-residue chain is Protein translocase subunit SecE (94 aa).

Residues 1-32 (MTDAVGSIDMPDAQDEAPDSKKSRKGGKRGKK) are disordered. Residues 22-32 (KSRKGGKRGKK) show a composition bias toward basic residues. A helical membrane pass occupies residues 65-85 (TVVIIFVVIMIGLVTLIDYGF).

Belongs to the SecE/SEC61-gamma family. Component of the Sec protein translocase complex. Heterotrimer consisting of SecY, SecE and SecG subunits. The heterotrimers can form oligomers, although 1 heterotrimer is thought to be able to translocate proteins. Interacts with the ribosome. Interacts with SecDF, and other proteins may be involved. Interacts with SecA.

It is found in the cell membrane. Essential subunit of the Sec protein translocation channel SecYEG. Clamps together the 2 halves of SecY. May contact the channel plug during translocation. In Streptomyces lividans, this protein is Protein translocase subunit SecE.